The primary structure comprises 425 residues: tRNA (guanine-N(7)-)-methyltransferase non-catalytic subunit wuho (425 aa).

Positions 67-102 (ATCAGKEPGGKEQQLTKQPEEGGTTASGSGVTSTSV) are disordered. Over residues 88-102 (GGTTASGSGVTSTSV) the composition is skewed to low complexity. 5 WD repeats span residues 97-138 (VTST…ARLL), 142-181 (PLAR…APPR), 185-224 (GHLS…DIHS), 228-266 (GHRE…ELLQ), and 325-365 (AGSW…PATS).

It belongs to the WD repeat TRM82 family. Forms a heterodimer with the catalytic subunit Mettl1. Interacts with mei-P26 and weakly interacts with bgcn; required for the function or formation of the mei-P26-bgcn-bam-sxl complex. Interacts with nanos; may be involved in mei-P26-dependent derepression of the BMP signaling pathway. Interacts with Myc; the interaction may be mediated by mei-P26 and may be involved in the regulation of ribosome biogenesis. In terms of tissue distribution, in testis, it is present at high level in hub cells, a niche for germline stem cells of testis. Ubiquitously expressed in all testicular cells throughout spermatogenesis. Ubiquitously expressed in all germline and somatic cells of the ovary.

Its subcellular location is the nucleus. The protein resides in the cytoplasm. The protein operates within tRNA modification; N(7)-methylguanine-tRNA biosynthesis. In terms of biological role, required for the Mettl1-dependent formation of N(7)-methylguanine at position 46 (m7G46) in tRNA. In the Mettl1-wuho methyltransferase complex, it is required to stabilize and induce conformational changes of the catalytic subunit. Required for binding of nanos mRNA and repression of translation by the mei-P26-bgcn-bam-sxl complex. May cooperate with mei-P26 and nanos to derepress the BMP signaling pathway. May cooperate with mei-P26 to suppress expression of a subset of microRNAs. May cooperate with mei-P26 to regulate bam expression levels in germline cells during gametogenesis. Required to promote mitosis to meiosis transition during gametogenesis. May regulate germline cell division in part by regulating ribosome biogenesis. In Drosophila yakuba (Fruit fly), this protein is tRNA (guanine-N(7)-)-methyltransferase non-catalytic subunit wuho.